A 306-amino-acid chain; its full sequence is Phosphatidylserine decarboxylase proenzyme (306 aa).

Residues Asp98, His155, and Ser259 each act as charge relay system; for autoendoproteolytic cleavage activity in the active site. Residue Ser259 is the Schiff-base intermediate with substrate; via pyruvic acid; for decarboxylase activity of the active site. At Ser259 the chain carries Pyruvic acid (Ser); by autocatalysis.

It belongs to the phosphatidylserine decarboxylase family. PSD-B subfamily. Prokaryotic type I sub-subfamily. In terms of assembly, heterodimer of a large membrane-associated beta subunit and a small pyruvoyl-containing alpha subunit. Pyruvate is required as a cofactor. Post-translationally, is synthesized initially as an inactive proenzyme. Formation of the active enzyme involves a self-maturation process in which the active site pyruvoyl group is generated from an internal serine residue via an autocatalytic post-translational modification. Two non-identical subunits are generated from the proenzyme in this reaction, and the pyruvate is formed at the N-terminus of the alpha chain, which is derived from the carboxyl end of the proenzyme. The autoendoproteolytic cleavage occurs by a canonical serine protease mechanism, in which the side chain hydroxyl group of the serine supplies its oxygen atom to form the C-terminus of the beta chain, while the remainder of the serine residue undergoes an oxidative deamination to produce ammonia and the pyruvoyl prosthetic group on the alpha chain. During this reaction, the Ser that is part of the protease active site of the proenzyme becomes the pyruvoyl prosthetic group, which constitutes an essential element of the active site of the mature decarboxylase.

Its subcellular location is the cell membrane. The enzyme catalyses a 1,2-diacyl-sn-glycero-3-phospho-L-serine + H(+) = a 1,2-diacyl-sn-glycero-3-phosphoethanolamine + CO2. The protein operates within phospholipid metabolism; phosphatidylethanolamine biosynthesis; phosphatidylethanolamine from CDP-diacylglycerol: step 2/2. In terms of biological role, catalyzes the formation of phosphatidylethanolamine (PtdEtn) from phosphatidylserine (PtdSer). This is Phosphatidylserine decarboxylase proenzyme from Nitrosococcus oceani (strain ATCC 19707 / BCRC 17464 / JCM 30415 / NCIMB 11848 / C-107).